Here is a 613-residue protein sequence, read N- to C-terminus: Glutamyl-tRNA(Gln) amidotransferase subunit E (613 aa).

This sequence belongs to the GatB/GatE family. GatE subfamily. As to quaternary structure, heterodimer of GatD and GatE.

The enzyme catalyses L-glutamyl-tRNA(Gln) + L-glutamine + ATP + H2O = L-glutaminyl-tRNA(Gln) + L-glutamate + ADP + phosphate + H(+). Allows the formation of correctly charged Gln-tRNA(Gln) through the transamidation of misacylated Glu-tRNA(Gln) in organisms which lack glutaminyl-tRNA synthetase. The reaction takes place in the presence of glutamine and ATP through an activated gamma-phospho-Glu-tRNA(Gln). The GatDE system is specific for glutamate and does not act on aspartate. The chain is Glutamyl-tRNA(Gln) amidotransferase subunit E from Archaeoglobus fulgidus (strain ATCC 49558 / DSM 4304 / JCM 9628 / NBRC 100126 / VC-16).